A 244-amino-acid polypeptide reads, in one-letter code: 1-(5-phosphoribosyl)-5-[(5-phosphoribosylamino)methylideneamino] imidazole-4-carboxamide isomerase (244 aa).

The active-site Proton acceptor is the aspartate 7. Aspartate 129 serves as the catalytic Proton donor.

The protein belongs to the HisA/HisF family.

It localises to the cytoplasm. The enzyme catalyses 1-(5-phospho-beta-D-ribosyl)-5-[(5-phospho-beta-D-ribosylamino)methylideneamino]imidazole-4-carboxamide = 5-[(5-phospho-1-deoxy-D-ribulos-1-ylimino)methylamino]-1-(5-phospho-beta-D-ribosyl)imidazole-4-carboxamide. The protein operates within amino-acid biosynthesis; L-histidine biosynthesis; L-histidine from 5-phospho-alpha-D-ribose 1-diphosphate: step 4/9. The sequence is that of 1-(5-phosphoribosyl)-5-[(5-phosphoribosylamino)methylideneamino] imidazole-4-carboxamide isomerase from Pseudoalteromonas atlantica (strain T6c / ATCC BAA-1087).